The primary structure comprises 324 residues: uncharacterized protein (324 aa).

In terms of domain architecture, HTH lysR-type spans 6–63 (LKYRELKIISVIAASENISHAATVLGIAQANVSKYLADFESKVGLKVFDRTTRQLMLT). Positions 23–42 (ISHAATVLGIAQANVSKYLA) form a DNA-binding region, H-T-H motif.

It belongs to the LysR transcriptional regulatory family.

This is an uncharacterized protein from Escherichia coli (strain K12).